The following is a 393-amino-acid chain: Formate-dependent phosphoribosylglycinamide formyltransferase (393 aa).

N(1)-(5-phospho-beta-D-ribosyl)glycinamide contacts are provided by residues 22 to 23 (EL) and glutamate 82. Residues arginine 114, lysine 155, 160-165 (SSGKGQ), 195-198 (EGFI), and glutamate 203 each bind ATP. The region spanning 119–308 (RLAAEELDLP…QFALHARAIL (190 aa)) is the ATP-grasp domain. Positions 267 and 279 each coordinate Mg(2+). N(1)-(5-phospho-beta-D-ribosyl)glycinamide-binding positions include aspartate 286, lysine 356, and 363–364 (RR).

This sequence belongs to the PurK/PurT family. Homodimer.

The enzyme catalyses N(1)-(5-phospho-beta-D-ribosyl)glycinamide + formate + ATP = N(2)-formyl-N(1)-(5-phospho-beta-D-ribosyl)glycinamide + ADP + phosphate + H(+). It functions in the pathway purine metabolism; IMP biosynthesis via de novo pathway; N(2)-formyl-N(1)-(5-phospho-D-ribosyl)glycinamide from N(1)-(5-phospho-D-ribosyl)glycinamide (formate route): step 1/1. Functionally, involved in the de novo purine biosynthesis. Catalyzes the transfer of formate to 5-phospho-ribosyl-glycinamide (GAR), producing 5-phospho-ribosyl-N-formylglycinamide (FGAR). Formate is provided by PurU via hydrolysis of 10-formyl-tetrahydrofolate. This Pseudomonas fluorescens (strain ATCC BAA-477 / NRRL B-23932 / Pf-5) protein is Formate-dependent phosphoribosylglycinamide formyltransferase.